The following is a 266-amino-acid chain: Non-structural maintenance of chromosomes element 1 homolog (266 aa).

The segment at 1 to 102 is interaction with NSMCE3; that stretch reads MQGSTRRAGA…SVSKMATDFA (102 aa). The RING-type; atypical zinc-finger motif lies at 191 to 232; it reads CNICHSLLIQGQSCETCGIRMHLPCVAKYFQSTAEPRCPHCN. Residues 246–266 are disordered; that stretch reads EKEREAGISKSSRKSLRTRQH. A compositionally biased stretch (basic residues) spans 256–266; sequence SSRKSLRTRQH.

This sequence belongs to the NSE1 family. As to quaternary structure, component of the SMC5-SMC6 complex which consists at least of SMC5, SMC6, NSMCE2, NSMCE1, NSMCE4A or EID3 and NSMCE3. NSMCE1, NSMCE4A or EID3 and NSMCE3 probably form a subcomplex that bridges the head domains of the SMC5-SMC6 heterodimer. Interacts with NSMCE3. In terms of processing, ubiquitinated.

Its subcellular location is the nucleus. The protein localises to the chromosome. The protein resides in the telomere. It carries out the reaction S-ubiquitinyl-[E2 ubiquitin-conjugating enzyme]-L-cysteine + [acceptor protein]-L-lysine = [E2 ubiquitin-conjugating enzyme]-L-cysteine + N(6)-ubiquitinyl-[acceptor protein]-L-lysine.. RING-type zinc finger-containing E3 ubiquitin ligase that assembles with melanoma antigen protein (MAGE) to catalyze the direct transfer of ubiquitin from E2 ubiquitin-conjugating enzyme to a specific substrate. Within MAGE-RING ubiquitin ligase complex, MAGE stimulates and specifies ubiquitin ligase activity likely through recruitment and/or stabilization of the E2 ubiquitin-conjugating enzyme at the E3:substrate complex. Involved in maintenance of genome integrity, DNA damage response and DNA repair. NSMCE3/MAGEG1 and NSMCE1 ubiquitin ligase are components of SMC5-SMC6 complex and may positively regulate homologous recombination-mediated DNA repair. This is Non-structural maintenance of chromosomes element 1 homolog (Nsmce1) from Rattus norvegicus (Rat).